Consider the following 178-residue polypeptide: Dual-action ribosomal maturation protein DarP (178 aa).

Residues 1–14 (MTVSDHPQTVSQPD) are compositionally biased toward polar residues. The segment at 1–25 (MTVSDHPQTVSQPDPESESRPSKTR) is disordered.

The protein belongs to the DarP family.

It is found in the cytoplasm. Its function is as follows. Member of a network of 50S ribosomal subunit biogenesis factors which assembles along the 30S-50S interface, preventing incorrect 23S rRNA structures from forming. Promotes peptidyl transferase center (PTC) maturation. The polypeptide is Dual-action ribosomal maturation protein DarP (Nitrosomonas europaea (strain ATCC 19718 / CIP 103999 / KCTC 2705 / NBRC 14298)).